Consider the following 398-residue polypeptide: Transcription factor kk1f (398 aa).

The disordered stretch occupies residues 1-28 (MTFVETVAVPDNEERPSAGHNRPVADST). The bZIP domain maps to 31–62 (PNAREMKVQNRVAQRTHHRRLKTKLEVLRERL). Positions 34–50 (REMKVQNRVAQRTHHRR) are basic motif. Residues 51 to 58 (LKTKLEVL) form a leucine-zipper region.

Belongs to the bZIP family.

Its subcellular location is the nucleus. It functions in the pathway secondary metabolite biosynthesis. Transcription factor; part of the gene cluster that mediates the biosynthesis of KK-1, a novel cyclic depsipeptide with 10 residues which is a promising active compound with high activity against many plant pathogens, especially Botrytis cinerea. Positively regulates the expression of all the genes from the KK-1 biosynthesis gene cluster. The polypeptide is Transcription factor kk1f (Curvularia clavata).